We begin with the raw amino-acid sequence, 518 residues long: Glutamate--cysteine ligase (518 aa).

Belongs to the glutamate--cysteine ligase type 1 family. Type 1 subfamily.

The enzyme catalyses L-cysteine + L-glutamate + ATP = gamma-L-glutamyl-L-cysteine + ADP + phosphate + H(+). It participates in sulfur metabolism; glutathione biosynthesis; glutathione from L-cysteine and L-glutamate: step 1/2. The sequence is that of Glutamate--cysteine ligase from Escherichia coli O157:H7.